A 182-amino-acid chain; its full sequence is ATP synthase subunit b, chloroplastic (182 aa).

A helical membrane pass occupies residues 29 to 47 (IINLALLIVLVINVAKDVL).

It belongs to the ATPase B chain family. As to quaternary structure, F-type ATPases have 2 components, F(1) - the catalytic core - and F(0) - the membrane proton channel. F(1) has five subunits: alpha(3), beta(3), gamma(1), delta(1), epsilon(1). F(0) has four main subunits: a(1), b(1), b'(1) and c(10-14). The alpha and beta chains form an alternating ring which encloses part of the gamma chain. F(1) is attached to F(0) by a central stalk formed by the gamma and epsilon chains, while a peripheral stalk is formed by the delta, b and b' chains.

Its subcellular location is the plastid. The protein localises to the chloroplast thylakoid membrane. F(1)F(0) ATP synthase produces ATP from ADP in the presence of a proton or sodium gradient. F-type ATPases consist of two structural domains, F(1) containing the extramembraneous catalytic core and F(0) containing the membrane proton channel, linked together by a central stalk and a peripheral stalk. During catalysis, ATP synthesis in the catalytic domain of F(1) is coupled via a rotary mechanism of the central stalk subunits to proton translocation. In terms of biological role, component of the F(0) channel, it forms part of the peripheral stalk, linking F(1) to F(0). This Heterosigma akashiwo (strain NIES-293 / 8280G21-1) protein is ATP synthase subunit b, chloroplastic.